A 149-amino-acid polypeptide reads, in one-letter code: UPF0178 protein CPR_2251 (149 aa).

It belongs to the UPF0178 family.

This is UPF0178 protein CPR_2251 from Clostridium perfringens (strain SM101 / Type A).